The chain runs to 338 residues: MFSILGNSSKKKRNTQIYRIFFTLTFSLSNLFLAICYLFLNVRTVSSDSSVSLYDRQLFDQSSSVILNPDTSDPSIVLSSLETMRDLAHDIKFGQDVLEQPLCDQLFVLMDGKDYPNTIRSMSSVVLASALSNNFIAQKKALEMNIMPKIVNTLRQENHPVTLLKKLFLLSKSVQSFPLSEAFISKDLGSAILLQLYDFWSRNSHIDIPSAFQEKLLSRLSIIFENIARSLENVNFSKASKVIPIEWVFSTWCSIFQKYLMNNWHLRSISTLEVLLNTVSTIQSVSESCPEVNFYEWLNDKNLAYKNKLIYQDPDLATEFNLIIKEALSLPWPKKYNI.

The helical transmembrane segment at Ile20–Leu40 threads the bilayer.

The protein resides in the membrane. This is an uncharacterized protein from Schizosaccharomyces pombe (strain 972 / ATCC 24843) (Fission yeast).